Consider the following 60-residue polypeptide: Large ribosomal subunit protein uL30 (60 aa).

Belongs to the universal ribosomal protein uL30 family. In terms of assembly, part of the 50S ribosomal subunit.

The protein is Large ribosomal subunit protein uL30 of Bacillus anthracis (strain A0248).